We begin with the raw amino-acid sequence, 548 residues long: pH-responsive protein 1 (548 aa).

A signal peptide spans 1-20 (MYSLIKSLATFATLFSLTLA). An N-linked (GlcNAc...) asparagine glycan is attached at asparagine 41. The cysteines at positions 82 and 111 are disulfide-linked. Asparagine 173 and asparagine 261 each carry an N-linked (GlcNAc...) asparagine glycan. Disulfide bonds link cysteine 224-cysteine 358, cysteine 242-cysteine 273, cysteine 381-cysteine 432, cysteine 390-cysteine 456, and cysteine 409-cysteine 414. The tract at residues 483-518 (GKASSSGGSSKSGSSSASASGSSSSSTSSGSSSSSG) is disordered. Serine 517 carries GPI-anchor amidated serine lipidation. Residues 518–548 (GVKATQQMSMVKLVSIITIVTAFVGGMSVVF) constitute a propeptide, removed in mature form.

It belongs to the glycosyl hydrolase 72 family.

The protein localises to the cell membrane. Functionally, required for apical cell growth and plays an essential role in morphogenesis. May be integral to the pathogenic ability of the organism. The polypeptide is pH-responsive protein 1 (PHR1) (Candida albicans (strain SC5314 / ATCC MYA-2876) (Yeast)).